A 121-amino-acid chain; its full sequence is MDKTQSRLRRARQTRIKIAELQVARLAVHRTNTHIYAQVFSPCGTKVLASASTLEAEVRAQLADKSGKGGNVAAATLIGKRIAEKAKAAGIESVAFDRSGFRYHGRVKALADAAREAGLKF.

The protein belongs to the universal ribosomal protein uL18 family. As to quaternary structure, part of the 50S ribosomal subunit; part of the 5S rRNA/L5/L18/L25 subcomplex. Contacts the 5S and 23S rRNAs.

This is one of the proteins that bind and probably mediate the attachment of the 5S RNA into the large ribosomal subunit, where it forms part of the central protuberance. The protein is Large ribosomal subunit protein uL18 of Paraburkholderia phymatum (strain DSM 17167 / CIP 108236 / LMG 21445 / STM815) (Burkholderia phymatum).